We begin with the raw amino-acid sequence, 557 residues long: MKAILRASRIGRVILRYRLDALLEGTPAERWLRLAKPFVPRASAEIAAQSRGARLRLALQELGPIFVKFGQILSTRRDLIPADVAEELTLLQDRVKPFDGQAARLIVEAALGLPVSVAFASFDTVPLASASIAQVHAATLPPDANGVRREVVVKVLRPEIERQIDADIALLHSLATLVERTHPRADKIRPREVVAEIEGTLAAELDLQREGANASVLRRFWEGSDDLYVPEVIWSHTAERALTLERVYGIPSDDIAKLDAAGIDRKALAAKGVRVFYTQVFRDNFFHADAHAGNIWVDSDPERRLNPRFIALDFGIMGQLSQEDQYYLAENFMAIFHKDYRRMAELHVEAGWMPSNVRIDELEAAARSVCEPYFNRPLSEISLAQVLIKLFRVAQRYELTLQPQLILLQKTLLNIEGVGRQLDPRLDIWAVARPVLERILRERYSPRRVLRELSKRLPEIMTHAPDMPRLVYSWLTQQVEGRHQIAIRSPELLALDLSLRKLQTRVVTAITGSGLLVVAAVLYGLHPDGWYLGTVPVWSWISGGAGSAALLVAWLRR.

The 389-residue stretch at 121–509 folds into the Protein kinase domain; that stretch reads SFDTVPLASA…RKLQTRVVTA (389 aa). ATP-binding positions include 127–135 and lysine 154; that span reads LASASIAQV. Aspartate 289 acts as the Proton acceptor in catalysis. 2 consecutive transmembrane segments (helical) span residues 506-526 and 535-555; these read VVTAITGSGLLVVAAVLYGLH and VPVWSWISGGAGSAALLVAWL.

Belongs to the ABC1 family. UbiB subfamily.

Its subcellular location is the cell inner membrane. It functions in the pathway cofactor biosynthesis; ubiquinone biosynthesis [regulation]. Functionally, is probably a protein kinase regulator of UbiI activity which is involved in aerobic coenzyme Q (ubiquinone) biosynthesis. In Xanthomonas axonopodis pv. citri (strain 306), this protein is Probable protein kinase UbiB.